The chain runs to 380 residues: Flap endonuclease 1 (380 aa).

The segment at 1-105 is N-domain; it reads MGIKGLAQVL…GELAKRVARH (105 aa). Mg(2+) is bound at residue Asp-34. Residues Arg-47 and Arg-71 each contribute to the DNA site. Mg(2+) contacts are provided by Asp-87, Glu-159, Glu-161, Asp-180, and Asp-182. The segment at 123 to 254 is I-domain; the sequence is MVDRFAKRTV…ARAVELIRQY (132 aa). Residue Glu-159 participates in DNA binding. Positions 232 and 234 each coordinate DNA. A Mg(2+)-binding site is contributed by Asp-234. Residues 337–345 are interaction with PCNA; the sequence is PQGRLDSFF. Residues 340 to 380 form a disordered region; it reads RLDSFFKPVPSSPKKPVDTKSKGSAKRKRDSNKGGESKKKR. A compositionally biased stretch (low complexity) spans 342–353; that stretch reads DSFFKPVPSSPK. 2 positions are modified to phosphoserine: Ser-350 and Ser-351. The segment covering 370-380 has biased composition (basic and acidic residues); sequence SNKGGESKKKR.

The protein belongs to the XPG/RAD2 endonuclease family. FEN1 subfamily. Interacts with PCNA. Three molecules of rad2 bind to one PCNA trimer with each molecule binding to one PCNA monomer. PCNA stimulates the nuclease activity without altering cleavage specificity. Mg(2+) serves as cofactor. Post-translationally, phosphorylated. Phosphorylation upon DNA damage induces relocalization to the nuclear plasma.

The protein localises to the nucleus. It localises to the nucleolus. The protein resides in the nucleoplasm. Its subcellular location is the mitochondrion. Its function is as follows. Structure-specific nuclease with 5'-flap endonuclease and 5'-3' exonuclease activities involved in DNA replication and repair. During DNA replication, cleaves the 5'-overhanging flap structure that is generated by displacement synthesis when DNA polymerase encounters the 5'-end of a downstream Okazaki fragment. It enters the flap from the 5'-end and then tracks to cleave the flap base, leaving a nick for ligation. Also involved in the long patch base excision repair (LP-BER) pathway, by cleaving within the apurinic/apyrimidinic (AP) site-terminated flap. Acts as a genome stabilization factor that prevents flaps from equilibrating into structures that lead to duplications and deletions. Also possesses 5'-3' exonuclease activity on nicked or gapped double-stranded DNA, and exhibits RNase H activity. Also involved in replication and repair of rDNA and in repairing mitochondrial DNA. The polypeptide is Flap endonuclease 1 (Schizosaccharomyces pombe (strain 972 / ATCC 24843) (Fission yeast)).